We begin with the raw amino-acid sequence, 130 residues long: Small ribosomal subunit protein uS8 (130 aa).

The protein belongs to the universal ribosomal protein uS8 family. Part of the 30S ribosomal subunit.

Functionally, one of the primary rRNA binding proteins, it binds directly to 16S rRNA central domain where it helps coordinate assembly of the platform of the 30S subunit. The sequence is that of Small ribosomal subunit protein uS8 (rps8) from Methanocaldococcus jannaschii (strain ATCC 43067 / DSM 2661 / JAL-1 / JCM 10045 / NBRC 100440) (Methanococcus jannaschii).